The primary structure comprises 368 residues: Quinolinate synthase (368 aa).

Residues histidine 46 and serine 63 each coordinate iminosuccinate. Cysteine 110 contributes to the [4Fe-4S] cluster binding site. Iminosuccinate is bound by residues 141-143 and serine 162; that span reads YVN. Cysteine 230 lines the [4Fe-4S] cluster pocket. Residues 256 to 258 and threonine 273 contribute to the iminosuccinate site; that span reads HPE. Residue cysteine 320 participates in [4Fe-4S] cluster binding.

It belongs to the quinolinate synthase family. Type 3 subfamily. [4Fe-4S] cluster is required as a cofactor.

It localises to the cytoplasm. It carries out the reaction iminosuccinate + dihydroxyacetone phosphate = quinolinate + phosphate + 2 H2O + H(+). The protein operates within cofactor biosynthesis; NAD(+) biosynthesis; quinolinate from iminoaspartate: step 1/1. Catalyzes the condensation of iminoaspartate with dihydroxyacetone phosphate to form quinolinate. The polypeptide is Quinolinate synthase (Bacillus cereus (strain ZK / E33L)).